Here is a 477-residue protein sequence, read N- to C-terminus: Peptidyl-prolyl cis-trans isomerase FKBP53 (477 aa).

2 disordered regions span residues aspartate 104–glutamine 135 and alanine 153–threonine 366. A compositionally biased stretch (basic residues) spans lysine 264 to lysine 274. Over residues isoleucine 299–serine 321 the composition is skewed to polar residues. The span at lysine 322–lysine 331 shows a compositional bias: basic and acidic residues. Residues valine 351 to threonine 366 are compositionally biased toward polar residues. The PPIase FKBP-type domain occupies glycine 389 to glutamine 477.

Belongs to the FKBP-type PPIase family. As to quaternary structure, interacts with histone H3. Broadly expressed in leaves, flowers, stems and roots. Detected in root apical meristem region and pollen.

It localises to the nucleus. The enzyme catalyses [protein]-peptidylproline (omega=180) = [protein]-peptidylproline (omega=0). Its function is as follows. PPIases accelerate the folding of proteins. It catalyzes the cis-trans isomerization of proline imidic peptide bonds in oligopeptides. Histone chaperone possibly involved in H3/H4 deposition to the nucleosome. Associates with 18S rDNA chromatin and negatively regulates the level of its expression. The protein is Peptidyl-prolyl cis-trans isomerase FKBP53 (FKBP53) of Arabidopsis thaliana (Mouse-ear cress).